Consider the following 218-residue polypeptide: Peptide methionine sulfoxide reductase MsrA (218 aa).

Residue C57 is part of the active site.

It belongs to the MsrA Met sulfoxide reductase family.

The enzyme catalyses L-methionyl-[protein] + [thioredoxin]-disulfide + H2O = L-methionyl-(S)-S-oxide-[protein] + [thioredoxin]-dithiol. It carries out the reaction [thioredoxin]-disulfide + L-methionine + H2O = L-methionine (S)-S-oxide + [thioredoxin]-dithiol. Functionally, has an important function as a repair enzyme for proteins that have been inactivated by oxidation. Catalyzes the reversible oxidation-reduction of methionine sulfoxide in proteins to methionine. This is Peptide methionine sulfoxide reductase MsrA from Brucella suis biovar 1 (strain 1330).